Consider the following 394-residue polypeptide: Elongation factor Tu 2 (394 aa).

Positions 10–204 (KPHVNVGTIG…ALDSYIPEPE (195 aa)) constitute a tr-type G domain. The segment at 19-26 (GHVDHGKT) is G1. GTP is bound at residue 19–26 (GHVDHGKT). Residue Thr-26 coordinates Mg(2+). Residues 60–64 (GITIN) are G2. A G3 region spans residues 81–84 (DCPG). GTP contacts are provided by residues 81–85 (DCPGH) and 136–139 (NKCD). Residues 136 to 139 (NKCD) form a G4 region. Residues 174 to 176 (SAL) form a G5 region.

Belongs to the TRAFAC class translation factor GTPase superfamily. Classic translation factor GTPase family. EF-Tu/EF-1A subfamily. Monomer.

It localises to the cytoplasm. The catalysed reaction is GTP + H2O = GDP + phosphate + H(+). Its function is as follows. GTP hydrolase that promotes the GTP-dependent binding of aminoacyl-tRNA to the A-site of ribosomes during protein biosynthesis. The chain is Elongation factor Tu 2 from Shewanella oneidensis (strain ATCC 700550 / JCM 31522 / CIP 106686 / LMG 19005 / NCIMB 14063 / MR-1).